A 218-amino-acid chain; its full sequence is Large ribosomal subunit protein bL25 (218 aa).

This sequence belongs to the bacterial ribosomal protein bL25 family. CTC subfamily. In terms of assembly, part of the 50S ribosomal subunit; part of the 5S rRNA/L5/L18/L25 subcomplex. Contacts the 5S rRNA. Binds to the 5S rRNA independently of L5 and L18.

In terms of biological role, this is one of the proteins that binds to the 5S RNA in the ribosome where it forms part of the central protuberance. The chain is Large ribosomal subunit protein bL25 from Polaromonas naphthalenivorans (strain CJ2).